The primary structure comprises 417 residues: Gamma-glutamyl phosphate reductase (417 aa).

Belongs to the gamma-glutamyl phosphate reductase family.

The protein localises to the cytoplasm. It catalyses the reaction L-glutamate 5-semialdehyde + phosphate + NADP(+) = L-glutamyl 5-phosphate + NADPH + H(+). Its pathway is amino-acid biosynthesis; L-proline biosynthesis; L-glutamate 5-semialdehyde from L-glutamate: step 2/2. Its function is as follows. Catalyzes the NADPH-dependent reduction of L-glutamate 5-phosphate into L-glutamate 5-semialdehyde and phosphate. The product spontaneously undergoes cyclization to form 1-pyrroline-5-carboxylate. This Escherichia coli (strain 55989 / EAEC) protein is Gamma-glutamyl phosphate reductase.